The sequence spans 308 residues: Ribosomal RNA large subunit methyltransferase F (308 aa).

The protein belongs to the methyltransferase superfamily. METTL16/RlmF family.

The protein resides in the cytoplasm. The enzyme catalyses adenosine(1618) in 23S rRNA + S-adenosyl-L-methionine = N(6)-methyladenosine(1618) in 23S rRNA + S-adenosyl-L-homocysteine + H(+). Functionally, specifically methylates the adenine in position 1618 of 23S rRNA. This is Ribosomal RNA large subunit methyltransferase F from Escherichia coli O6:H1 (strain CFT073 / ATCC 700928 / UPEC).